Reading from the N-terminus, the 264-residue chain is 5'-nucleotidase SurE (264 aa).

Residues Asp10, Asp11, Ser43, and Asn97 each contribute to the a divalent metal cation site.

Belongs to the SurE nucleotidase family. Requires a divalent metal cation as cofactor.

The protein resides in the cytoplasm. It carries out the reaction a ribonucleoside 5'-phosphate + H2O = a ribonucleoside + phosphate. Functionally, nucleotidase that shows phosphatase activity on nucleoside 5'-monophosphates. The sequence is that of 5'-nucleotidase SurE from Sulfurimonas denitrificans (strain ATCC 33889 / DSM 1251) (Thiomicrospira denitrificans (strain ATCC 33889 / DSM 1251)).